Here is a 648-residue protein sequence, read N- to C-terminus: MTECFLPPSSSPSEHRRAEHGSGLTRTPSSEEISPTKFPGLYRTGEPSPPHDVLHEPPDTVSDDDKDHGKKKGKFKKKEKRTEGYAAFQEDSSGDEAESPSKVKRSKGIHVFKKPSFSKKKEKDFKIKEKPKEEKHKEEKHKEEKHKEKKSKDLTAADVVKQWKEKKKKKKPIQEPEVPQMDAPSVKPIFGVPLVDAVERTMMYDGVRLPAVFRECVDYMEKHGMKCEGVYRVSGIKSKVDELKAAYDREESPNLEEYEPNTVASLLKQYLRDLPENLLTKELMPRFEEACGKTTEMEKVQEFQRLLRELPECNHLLLSWLIVHLDHVIAKELETKMNIQNISIVLSPTVQISNRVLYVLFTHVQELFGTVVLKQVTRPLRWSNMATMPTLPETQAGIKEEIRRQEFLLNCLHRDLQGGIKDLSKEERLWEVQRILTALKRKLREAKRQECETKIAQEIASLSKEDVSKEEMNENEEVINILLAQENEILTEQEELLAMEQFLRRQIASEKEEIDRLRAEIAEIQSRQQHGRSETEEYSSDSESESEDEEELQLILEDLQRQNEELEIKNNHLNQAVHEEREAIIELRVQLRLLQMQRAKSEQQPQEEEEPERRGGIGPPPCDGVLEVRVAKEQAKASPSKDRKETPI.

The interval 1-158 (MTECFLPPSS…KKSKDLTAAD (158 aa)) is disordered. Thr-2 carries the N-acetylthreonine modification. Polar residues predominate over residues 24–33 (LTRTPSSEEI). Residues Ser-29, Ser-30, and Ser-34 each carry the phosphoserine modification. Residue Thr-44 is modified to Phosphothreonine. 2 positions are modified to phosphoserine: Ser-48 and Ser-62. Basic and acidic residues predominate over residues 52–68 (DVLHEPPDTVSDDDKDH). 69–74 (GKKKGK) contributes to the ATP binding site. The segment covering 69–79 (GKKKGKFKKKE) has biased composition (basic residues). Ser-92 and Ser-93 each carry phosphoserine. The span at 102–118 (KVKRSKGIHVFKKPSFS) shows a compositional bias: basic residues. A nuclear localization signal region spans residues 102 to 119 (KVKRSKGIHVFKKPSFSK). Basic and acidic residues predominate over residues 119–155 (KKKEKDFKIKEKPKEEKHKEEKHKEEKHKEKKSKDLT). Residues 154 to 219 (LTAADVVKQW…PAVFRECVDY (66 aa)) form a mediates association with membranes and could form transmembrane domains region. The Rho-GAP domain maps to 192 to 380 (VPLVDAVERT…VVLKQVTRPL (189 aa)). A mediates interaction with RALA and RALB region spans residues 403-499 (RRQEFLLNCL…LTEQEELLAM (97 aa)). 418–425 (GGIKDLSK) is a binding site for ATP. Phosphoserine occurs at positions 461 and 463. Positions 500-648 (EQFLRRQIAS…PSKDRKETPI (149 aa)) are mediates interaction with REPS1 and REPS2. Disordered stretches follow at residues 525–552 (QSRQ…EEEL) and 598–648 (RAKS…ETPI). Residues 536 to 552 (EEYSSDSESESEDEEEL) are compositionally biased toward acidic residues. Positions 629–648 (RVAKEQAKASPSKDRKETPI) are enriched in basic and acidic residues. Ser-638 carries the post-translational modification Phosphoserine.

As to quaternary structure, interacts with the GTP-bound form of RALA (via effector domain); during mitosis, recruits RALBP1 to the mitochondrion where it promotes DNM1L phosphorylation and mitochondrial fission. Interacts with DNM1L; mediates its mitotic kinase cyclin B-CDK1-mediated phosphorylation during mitosis to promote mitochondrial fission. Interacts with the mitotic kinase cyclin B-CDK1 during mitosis. Interacts with the GTP-bound form of RALB (via effector domain). Interacts with REPS1; the interaction is direct and does not affect RALA-binding nor GTPase activator activity of RALBP1. Interacts with REPS2; the interaction is direct and does not affect RALA-binding nor GTPase activator activity of RALBP1. Interacts with EPN1, NUMB and TFAP2A during interphase and mitosis. Interacts with AP2M1; as part of the AP2 complex. Interacts with CDC42. Interacts with RAC1. Tyrosine-phosphorylated upon stimulation of cells with EGF. Post-translationally, may undergo proteolytic cleavage to give peptides which reassemble to form a transporter complex. Ubiquitous. The highest level of expression was observed in ovaries and skeletal muscle, whereas the lowest was found in spleen, liver and peripheral blood leukocytes.

It is found in the cell membrane. Its subcellular location is the cytoplasm. The protein resides in the cytosol. It localises to the cytoskeleton. The protein localises to the spindle pole. It is found in the nucleus. Its subcellular location is the mitochondrion. The catalysed reaction is an S-substituted glutathione(in) + ATP + H2O = an S-substituted glutathione(out) + ADP + phosphate + H(+). It carries out the reaction ATP + H2O + xenobioticSide 1 = ADP + phosphate + xenobioticSide 2.. It catalyses the reaction leukotriene C4(in) + ATP + H2O = leukotriene C4(out) + ADP + phosphate + H(+). Multifunctional protein that functions as a downstream effector of RALA and RALB. As a GTPase-activating protein/GAP can inactivate CDC42 and RAC1 by stimulating their GTPase activity. As part of the Ral signaling pathway, may also regulate ligand-dependent EGF and insulin receptors-mediated endocytosis. During mitosis, may act as a scaffold protein in the phosphorylation of EPSIN/EPN1 by the mitotic kinase cyclin B-CDK1, preventing endocytosis during that phase of the cell cycle. During mitosis, also controls mitochondrial fission as an effector of RALA. Recruited to mitochondrion by RALA, acts as a scaffold to foster the mitotic kinase cyclin B-CDK1-mediated phosphorylation and activation of DNM1L. Functionally, could also function as a primary ATP-dependent active transporter for glutathione conjugates of electrophiles. May also actively catalyze the efflux of a wide range of substrates including xenobiotics like doxorubicin (DOX) contributing to cell multidrug resistance. This is RalA-binding protein 1 from Mus musculus (Mouse).